The primary structure comprises 337 residues: Glyceraldehyde-3-phosphate dehydrogenase (337 aa).

NAD(+) is bound by residues 12–13 (RI), Asp36, Arg80, and Ser122. Residues 153-155 (SCT) and Thr184 contribute to the D-glyceraldehyde 3-phosphate site. Catalysis depends on Cys154, which acts as the Nucleophile. Asn185 lines the NAD(+) pocket. Residues Arg199, 212–213 (TG), and Arg235 contribute to the D-glyceraldehyde 3-phosphate site. Asn318 serves as a coordination point for NAD(+).

It belongs to the glyceraldehyde-3-phosphate dehydrogenase family. Homotetramer.

The protein localises to the cytoplasm. The catalysed reaction is D-glyceraldehyde 3-phosphate + phosphate + NAD(+) = (2R)-3-phospho-glyceroyl phosphate + NADH + H(+). It functions in the pathway carbohydrate degradation; glycolysis; pyruvate from D-glyceraldehyde 3-phosphate: step 1/5. Functionally, catalyzes the oxidative phosphorylation of glyceraldehyde 3-phosphate (G3P) to 1,3-bisphosphoglycerate (BPG) using the cofactor NAD. The first reaction step involves the formation of a hemiacetal intermediate between G3P and a cysteine residue, and this hemiacetal intermediate is then oxidized to a thioester, with concomitant reduction of NAD to NADH. The reduced NADH is then exchanged with the second NAD, and the thioester is attacked by a nucleophilic inorganic phosphate to produce BPG. This chain is Glyceraldehyde-3-phosphate dehydrogenase (gap), found in Zymomonas mobilis subsp. mobilis (strain ATCC 31821 / ZM4 / CP4).